Reading from the N-terminus, the 332-residue chain is Glycerol-3-phosphate dehydrogenase [NAD(P)+] (332 aa).

Positions 11, 12, 32, and 106 each coordinate NADPH. Sn-glycerol 3-phosphate-binding residues include Lys-106, Gly-137, and Ser-139. Ala-141 provides a ligand contact to NADPH. Lys-192, Asp-245, Ser-255, Arg-256, and Asn-257 together coordinate sn-glycerol 3-phosphate. Lys-192 acts as the Proton acceptor in catalysis. Arg-256 lines the NADPH pocket. 2 residues coordinate NADPH: Val-280 and Glu-282.

Belongs to the NAD-dependent glycerol-3-phosphate dehydrogenase family.

Its subcellular location is the cytoplasm. The catalysed reaction is sn-glycerol 3-phosphate + NAD(+) = dihydroxyacetone phosphate + NADH + H(+). The enzyme catalyses sn-glycerol 3-phosphate + NADP(+) = dihydroxyacetone phosphate + NADPH + H(+). The protein operates within membrane lipid metabolism; glycerophospholipid metabolism. Its function is as follows. Catalyzes the reduction of the glycolytic intermediate dihydroxyacetone phosphate (DHAP) to sn-glycerol 3-phosphate (G3P), the key precursor for phospholipid synthesis. This is Glycerol-3-phosphate dehydrogenase [NAD(P)+] from Macrococcus caseolyticus (strain JCSC5402) (Macrococcoides caseolyticum).